The primary structure comprises 250 residues: uncharacterized protein (250 aa).

A run of 7 helical transmembrane segments spans residues Val-36–Val-56, Pro-73–Met-93, Ala-101–Leu-121, Val-128–Thr-148, Phe-156–Phe-176, Pro-180–Tyr-200, and Phe-225–Phe-245.

Belongs to the BI1 family.

The protein resides in the cell membrane. This is an uncharacterized protein from Caulobacter vibrioides (strain ATCC 19089 / CIP 103742 / CB 15) (Caulobacter crescentus).